Here is a 149-residue protein sequence, read N- to C-terminus: Small ribosomal subunit protein bS6 (149 aa).

The tract at residues 94 to 149 is disordered; that stretch reads EKHEEGPSAMMQKRDRDDRPRRDGDRPDRGGFGDRGPRPDRGDRDDRPRRPREDRA.

Belongs to the bacterial ribosomal protein bS6 family.

Its function is as follows. Binds together with bS18 to 16S ribosomal RNA. This chain is Small ribosomal subunit protein bS6, found in Sinorhizobium fredii (strain NBRC 101917 / NGR234).